A 246-amino-acid polypeptide reads, in one-letter code: 1-(5-phosphoribosyl)-5-[(5-phosphoribosylamino)methylideneamino] imidazole-4-carboxamide isomerase (246 aa).

Asp-7 acts as the Proton acceptor in catalysis. The active-site Proton donor is the Asp-129.

This sequence belongs to the HisA/HisF family.

Its subcellular location is the cytoplasm. The catalysed reaction is 1-(5-phospho-beta-D-ribosyl)-5-[(5-phospho-beta-D-ribosylamino)methylideneamino]imidazole-4-carboxamide = 5-[(5-phospho-1-deoxy-D-ribulos-1-ylimino)methylamino]-1-(5-phospho-beta-D-ribosyl)imidazole-4-carboxamide. Its pathway is amino-acid biosynthesis; L-histidine biosynthesis; L-histidine from 5-phospho-alpha-D-ribose 1-diphosphate: step 4/9. In Buchnera aphidicola subsp. Acyrthosiphon pisum (strain Tuc7), this protein is 1-(5-phosphoribosyl)-5-[(5-phosphoribosylamino)methylideneamino] imidazole-4-carboxamide isomerase.